Consider the following 74-residue polypeptide: Conotoxin MiK41 (74 aa).

An N-terminal signal peptide occupies residues 1 to 22 (MKLTCVLIITVLFLTACQLTTA). A propeptide spanning residues 23-45 (VTYSRGEHKHRALMSTGTNYRLP) is cleaved from the precursor. 3 disulfides stabilise this stretch: cysteine 48/cysteine 62, cysteine 55/cysteine 66, and cysteine 61/cysteine 73.

Belongs to the conotoxin O1 superfamily. In terms of tissue distribution, expressed by the venom duct.

It is found in the secreted. This chain is Conotoxin MiK41, found in Conus miles (Soldier cone).